The primary structure comprises 304 residues: Ribosomal protein L11 methyltransferase (304 aa).

Residues Thr-155, Gly-176, Asp-198, and Asn-239 each coordinate S-adenosyl-L-methionine.

This sequence belongs to the methyltransferase superfamily. PrmA family.

It is found in the cytoplasm. It catalyses the reaction L-lysyl-[protein] + 3 S-adenosyl-L-methionine = N(6),N(6),N(6)-trimethyl-L-lysyl-[protein] + 3 S-adenosyl-L-homocysteine + 3 H(+). Functionally, methylates ribosomal protein L11. The sequence is that of Ribosomal protein L11 methyltransferase from Caldicellulosiruptor bescii (strain ATCC BAA-1888 / DSM 6725 / KCTC 15123 / Z-1320) (Anaerocellum thermophilum).